The chain runs to 561 residues: Dihydroxy-acid dehydratase 3 (561 aa).

[2Fe-2S] cluster is bound at residue Cys-50. A Mg(2+)-binding site is contributed by Asp-82. Cys-123 is a [2Fe-2S] cluster binding site. Residues Asp-124 and Lys-125 each contribute to the Mg(2+) site. Lys-125 is modified (N6-carboxylysine). Residue Cys-195 coordinates [2Fe-2S] cluster. Glu-447 lines the Mg(2+) pocket. The active-site Proton acceptor is Ser-473.

It belongs to the IlvD/Edd family. In terms of assembly, homodimer. Requires [2Fe-2S] cluster as cofactor. Mg(2+) serves as cofactor.

The enzyme catalyses (2R)-2,3-dihydroxy-3-methylbutanoate = 3-methyl-2-oxobutanoate + H2O. It catalyses the reaction (2R,3R)-2,3-dihydroxy-3-methylpentanoate = (S)-3-methyl-2-oxopentanoate + H2O. The protein operates within amino-acid biosynthesis; L-isoleucine biosynthesis; L-isoleucine from 2-oxobutanoate: step 3/4. It participates in amino-acid biosynthesis; L-valine biosynthesis; L-valine from pyruvate: step 3/4. Functionally, functions in the biosynthesis of branched-chain amino acids. Catalyzes the dehydration of (2R,3R)-2,3-dihydroxy-3-methylpentanoate (2,3-dihydroxy-3-methylvalerate) into 2-oxo-3-methylpentanoate (2-oxo-3-methylvalerate) and of (2R)-2,3-dihydroxy-3-methylbutanoate (2,3-dihydroxyisovalerate) into 2-oxo-3-methylbutanoate (2-oxoisovalerate), the penultimate precursor to L-isoleucine and L-valine, respectively. In Bordetella bronchiseptica (strain ATCC BAA-588 / NCTC 13252 / RB50) (Alcaligenes bronchisepticus), this protein is Dihydroxy-acid dehydratase 3.